Here is a 424-residue protein sequence, read N- to C-terminus: UDP-N-acetylglucosamine 1-carboxyvinyltransferase (424 aa).

Phosphoenolpyruvate is bound at residue Lys22 to Asn23. A UDP-N-acetyl-alpha-D-glucosamine-binding site is contributed by Arg96. Cys120 acts as the Proton donor in catalysis. The residue at position 120 (Cys120) is a 2-(S-cysteinyl)pyruvic acid O-phosphothioketal. UDP-N-acetyl-alpha-D-glucosamine contacts are provided by residues Arg125 to Gln129, Asp312, and Ile334.

It belongs to the EPSP synthase family. MurA subfamily.

Its subcellular location is the cytoplasm. The enzyme catalyses phosphoenolpyruvate + UDP-N-acetyl-alpha-D-glucosamine = UDP-N-acetyl-3-O-(1-carboxyvinyl)-alpha-D-glucosamine + phosphate. The protein operates within cell wall biogenesis; peptidoglycan biosynthesis. Cell wall formation. Adds enolpyruvyl to UDP-N-acetylglucosamine. The chain is UDP-N-acetylglucosamine 1-carboxyvinyltransferase from Polynucleobacter asymbioticus (strain DSM 18221 / CIP 109841 / QLW-P1DMWA-1) (Polynucleobacter necessarius subsp. asymbioticus).